We begin with the raw amino-acid sequence, 149 residues long: Transcriptional regulator MraZ (149 aa).

SpoVT-AbrB domains lie at 5-52 (ITTL…PLPE) and 81-124 (AEEC…DSMV).

The protein belongs to the MraZ family. In terms of assembly, forms oligomers.

The protein localises to the cytoplasm. Its subcellular location is the nucleoid. In Nitrosococcus oceani (strain ATCC 19707 / BCRC 17464 / JCM 30415 / NCIMB 11848 / C-107), this protein is Transcriptional regulator MraZ.